A 182-amino-acid polypeptide reads, in one-letter code: Nucleoside triphosphate/diphosphate phosphatase (182 aa).

Catalysis depends on arginine 27, which acts as the Proton donor. Mg(2+) contacts are provided by asparagine 91, aspartate 107, aspartate 109, aspartate 111, aspartate 124, and glutamate 127.

It belongs to the Ntdp family. The cofactor is Mg(2+).

The catalysed reaction is a ribonucleoside 5'-triphosphate + H2O = a ribonucleoside 5'-diphosphate + phosphate + H(+). It carries out the reaction a ribonucleoside 5'-diphosphate + H2O = a ribonucleoside 5'-phosphate + phosphate + H(+). Its function is as follows. Has nucleoside phosphatase activity towards nucleoside triphosphates and nucleoside diphosphates. This Lactiplantibacillus plantarum (strain ATCC BAA-793 / NCIMB 8826 / WCFS1) (Lactobacillus plantarum) protein is Nucleoside triphosphate/diphosphate phosphatase.